Reading from the N-terminus, the 226-residue chain is Probable endolytic peptidoglycan transglycosylase RlpA (226 aa).

A signal peptide spans 1-26 (MERFLGFRTPLGALGVVILLTLILSS). C27 carries N-palmitoyl cysteine lipidation. The S-diacylglycerol cysteine moiety is linked to residue C27.

It belongs to the RlpA family.

It is found in the cell membrane. Functionally, lytic transglycosylase with a strong preference for naked glycan strands that lack stem peptides. In Aquifex aeolicus (strain VF5), this protein is Probable endolytic peptidoglycan transglycosylase RlpA.